Reading from the N-terminus, the 171-residue chain is Zinc finger A20 and AN1 domain-containing stress-associated protein 8 (171 aa).

The A20-type zinc-finger motif lies at 11–45; it reads PEGPILCINNCGFFGSAATMNMCSKCHKEMIMKQE. Zn(2+)-binding residues include C17, C21, C33, C36, C112, C115, C126, C128, C133, H136, H142, and C144. The AN1-type zinc-finger motif lies at 106–152; sequence REGPNRCSTCRKRVGLTGFNCRCGNLYCAMHRYSDKHDCQFDYRTAA.

Functionally, may be involved in environmental stress response. In Oryza sativa subsp. indica (Rice), this protein is Zinc finger A20 and AN1 domain-containing stress-associated protein 8 (SAP8).